Reading from the N-terminus, the 371-residue chain is Solute carrier family 35 member F6 (371 aa).

The signal sequence occupies residues 1–25 (MAWTKHQLFLAGLMLVTGSINTLSA). The next 2 membrane-spanning stretches (helical) occupy residues 48–68 (FLQAVGMFLGEFSCLAAFYLL) and 89–109 (LLFLPPALCDMTGTSLMYVAL). The 57-residue stretch at 104–160 (LMYVALNMTSASSFQMLRGAVIIFTGLFSVAFLGRRLVLSQWLGILATIAGLVVVGL) folds into the EamA domain. Asn110 is a glycosylation site (N-linked (GlcNAc...) asparagine). Transmembrane regions (helical) follow at residues 117–137 (FQMLRGAVIIFTGLFSVAFLG), 140–160 (LVLSQWLGILATIAGLVVVGL), 176–196 (VITGDLLIIMAQIIVAIQMVL), 216–236 (GLFGFVILSLLLVPMYYIPAG), 261–281 (LIAVALLGNISSIAFFNFAGI), 295–312 (LDSLRTVVIWALSLALGW), and 317–336 (ALQILGFLILLIGTALYNGL). A disordered region spans residues 347 to 371 (GRPPAEESEQERLLGGSRTPINDAS). Thr365 bears the Phosphothreonine mark.

The protein belongs to the SLC35F solute transporter family. Interacts with SLC25A5.

It localises to the mitochondrion. Its subcellular location is the lysosome membrane. Involved in the maintenance of mitochondrial membrane potential in pancreatic ductal adenocarcinoma (PDAC) cells. Promotes pancreatic ductal adenocarcinoma (PDAC) cell growth. May play a role as a nucleotide-sugar transporter. The chain is Solute carrier family 35 member F6 (SLC35F6) from Pongo abelii (Sumatran orangutan).